A 649-amino-acid polypeptide reads, in one-letter code: Putative calpain-like cysteine protease A (649 aa).

Residues 1 to 3 (MLT) constitute a propeptide that is removed on maturation. Disordered stretches follow at residues 1–22 (MLTT…SSPS) and 124–193 (PLSN…SMPA). One can recognise a C2 domain in the interval 15 to 123 (TTTTSSPSSD…LHANGEAKWY (109 aa)). The span at 140 to 149 (ITNSNNKDNN) shows a compositional bias: low complexity. The span at 159–172 (AQEKGDEDQHHSAD) shows a compositional bias: basic and acidic residues. 2 domain III regions span residues 458 to 489 (EGTY…NATF) and 498 to 633 (EVEQ…ISLD).

The protein belongs to the peptidase C2 family. As to quaternary structure, monomer. Post-translationally, undergoes autolytic cleavage between Pro-192 and Ala-193.

The protein resides in the cytoplasm. It localises to the cytosol. Its function is as follows. Has a weak caseinolytic activity. In Dictyostelium discoideum (Social amoeba), this protein is Putative calpain-like cysteine protease A (cplA).